The chain runs to 501 residues: GTPase Obg (501 aa).

The region spanning 2 to 159 (NRFIDRVVLH…HDLILELKSM (158 aa)) is the Obg domain. Residues 160–341 (ADVGLVGFPS…LKYKLLEIVQ (182 aa)) enclose the OBG-type G domain. Residues 166 to 173 (GFPSAGKS), 191 to 195 (FTTLQ), 212 to 215 (DVPG), 292 to 295 (NKAD), and 322 to 324 (SAV) each bind GTP. Residues serine 173 and threonine 193 each contribute to the Mg(2+) site. Residues 362 to 442 (VDHRTKGQFQ…IGGISFEWEP (81 aa)) form the OCT domain.

It belongs to the TRAFAC class OBG-HflX-like GTPase superfamily. OBG GTPase family. Monomer. The cofactor is Mg(2+).

Its subcellular location is the cytoplasm. Functionally, an essential GTPase which binds GTP, GDP and possibly (p)ppGpp with moderate affinity, with high nucleotide exchange rates and a fairly low GTP hydrolysis rate. Plays a role in control of the cell cycle, stress response, ribosome biogenesis and in those bacteria that undergo differentiation, in morphogenesis control. The chain is GTPase Obg from Corynebacterium glutamicum (strain R).